Consider the following 206-residue polypeptide: Guanylate kinase (206 aa).

The 179-residue stretch at 5–183 (FNLLILSGPS…SKEIILSIAK (179 aa)) folds into the Guanylate kinase-like domain. An ATP-binding site is contributed by 12–19 (GPSGAGKS).

Belongs to the guanylate kinase family.

Its subcellular location is the cytoplasm. It catalyses the reaction GMP + ATP = GDP + ADP. Essential for recycling GMP and indirectly, cGMP. This Helicobacter pylori (strain J99 / ATCC 700824) (Campylobacter pylori J99) protein is Guanylate kinase (gmk).